The sequence spans 601 residues: ATP-dependent RNA helicase DeaD (601 aa).

The Q motif motif lies at 6 to 34; sequence STFSFLGLNPFIIKSLSKMGYVKPSPIQA. Residues 37-208 form the Helicase ATP-binding domain; the sequence is IPLLLEGRDV…KRFMKNPQEI (172 aa). Residue 50-57 participates in ATP binding; the sequence is AQTGSGKT. The DEAD box motif lies at 156 to 159; it reads DEAD. The 148-residue stretch at 231–378 folds into the Helicase C-terminal domain; the sequence is KTDALIRFLE…EVQLPKIEVL (148 aa). Over residues 564–581 the composition is skewed to basic and acidic residues; sequence SIFNKDKNNKRRFSDNRL. Positions 564-601 are disordered; it reads SIFNKDKNNKRRFSDNRLNKSSSIKNETKSSFFRRKSV. Over residues 582-594 the composition is skewed to polar residues; it reads NKSSSIKNETKSS.

It belongs to the DEAD box helicase family. DeaD/CsdA subfamily.

It is found in the cytoplasm. It carries out the reaction ATP + H2O = ADP + phosphate + H(+). In terms of biological role, DEAD-box RNA helicase involved in various cellular processes at low temperature, including ribosome biogenesis, mRNA degradation and translation initiation. In Buchnera aphidicola subsp. Schizaphis graminum (strain Sg), this protein is ATP-dependent RNA helicase DeaD.